Consider the following 320-residue polypeptide: Mitochondrial thiamine pyrophosphate carrier 1 (320 aa).

Solcar repeat units follow at residues glycine 12–alanine 110, proline 119–serine 205, and proline 213–alanine 308. The next 6 membrane-spanning stretches (helical) occupy residues valine 17–leucine 35, leucine 91–threonine 107, phenylalanine 125–leucine 145, glycine 180–alanine 197, alanine 219–valine 239, and glycine 283–tryptophan 300.

This sequence belongs to the mitochondrial carrier (TC 2.A.29) family.

The protein resides in the mitochondrion inner membrane. Mitochondrial transporter that mediates uptake of thiamine pyrophosphate (ThPP) into mitochondria. The sequence is that of Mitochondrial thiamine pyrophosphate carrier 1 (tpc1) from Aspergillus terreus (strain NIH 2624 / FGSC A1156).